The sequence spans 330 residues: Malate dehydrogenase (330 aa).

Residue 15 to 21 participates in NAD(+) binding; the sequence is GGTGQIA. Substrate-binding residues include Arg-96 and Arg-102. NAD(+) contacts are provided by residues Asn-109, Gln-116, and 133-135; that span reads VGN. Substrate is bound by residues Asn-135 and Arg-166. His-191 serves as the catalytic Proton acceptor.

The protein belongs to the LDH/MDH superfamily. MDH type 2 family.

The catalysed reaction is (S)-malate + NAD(+) = oxaloacetate + NADH + H(+). Its function is as follows. Catalyzes the reversible oxidation of malate to oxaloacetate. The sequence is that of Malate dehydrogenase from Chlamydia caviae (strain ATCC VR-813 / DSM 19441 / 03DC25 / GPIC) (Chlamydophila caviae).